Here is a 574-residue protein sequence, read N- to C-terminus: Pentatricopeptide repeat-containing protein At5g25630 (574 aa).

The segment covering Met1–Thr21 has biased composition (basic and acidic residues). A disordered region spans residues Met1 to Thr25. PPR repeat units lie at residues Thr44–Pro78, Ser79–Leu113, Asp114–Pro148, Thr149–Asp183, Asn187–Pro221, Asp222–Pro258, Asn259–Ala293, Asn294–Ala328, Asp329–Pro363, Asp364–Glu394, Asn398–Pro432, and Asn433–Pro467.

Belongs to the PPR family. P subfamily.

The chain is Pentatricopeptide repeat-containing protein At5g25630 from Arabidopsis thaliana (Mouse-ear cress).